The primary structure comprises 694 residues: Polynucleotide 3'-phosphatase ZDP (694 aa).

PARP-type zinc fingers lie at residues 50–132 and 165–247; these read VVAE…EQCG and VIAD…EVNK. Residues Cys-62, Cys-65, His-93, Cys-96, Cys-177, Cys-180, His-208, and Cys-211 each coordinate Zn(2+). Residues 266 to 331 form a disordered region; the sequence is AIADNELTEE…SPDSSKVISE (66 aa). The segment covering 302 to 321 has biased composition (basic and acidic residues); it reads ESKKPASDEISEQKTKDVKN. A compositionally biased stretch (polar residues) spans 322–331; that stretch reads SPDSSKVISE. The segment at 328–410 adopts a PARP-type 3 zinc-finger fold; sequence VISEYAKSSR…ALKELVQQCG (83 aa). Residues Cys-340, Cys-343, His-371, and Cys-374 each coordinate Zn(2+).

It in the C-terminal section; belongs to the DNA 3' phosphatase family. In terms of assembly, interacts with ROS1 (via the central region). Binds to XRCC1.

It is found in the nucleus. The protein resides in the nucleoplasm. It carries out the reaction a 3'end (2'-deoxyribonucleotide 3'-phosphate)-DNA + H2O = a 3'-end 2'-deoxyribonucleotide-DNA + phosphate. Its activity is regulated as follows. Activated by the presence of DNA. Stimulated by XRCC1. Nick-sensing 3'-phosphoesterase involved in a base excision repair pathway required for active DNA demethylation. The N-terminal DNA-binding domain binds specifically to gap sites and sharply bends the target DNA. Lacks 5'-kinase activity but is capable of 3'-phosphoglycolate end processing. Inactive on 3'-alpha,beta-unsaturated aldehyde (3'-dRP). Protects partially genes from transcriptional silencing by preventing promoter DNA hypermethylation. The polypeptide is Polynucleotide 3'-phosphatase ZDP (ZDP) (Arabidopsis thaliana (Mouse-ear cress)).